A 500-amino-acid chain; its full sequence is Protein ASPARTIC PROTEASE IN GUARD CELL 1 (500 aa).

The N-terminal stretch at 1–24 (MAFPRFLSLLAVVTLSLFLTTTDA) is a signal peptide. The Peptidase A1 domain maps to 162-496 (YFSRIGVGTP…DLSKNVIGLS (335 aa)). Residue D180 is part of the active site. Cystine bridges form between C190–C193, C196–C271, C217–C235, C222–C230, C307–C500, and C419–C461. The active site involves D379.

It belongs to the peptidase A1 family. As to expression, expressed in young seedlings, leaves, guard-cells, stems, flowers and siliques, but not in roots or mesophyll cells.

The protein localises to the endoplasmic reticulum. With respect to regulation, inhibited by pepstatin A. Functionally, aspartic protease involved in drought avoidance through abscisic acid signaling. The chain is Protein ASPARTIC PROTEASE IN GUARD CELL 1 (ASPG1) from Arabidopsis thaliana (Mouse-ear cress).